The sequence spans 369 residues: MKNAYYIGLMSGTSMDGVDAVLVDFSGAQPQLITSHTEAIPSHLLKGLQRLCSPSTDEINRLGRLDRNVGELFALAVNNLLTKCAIAKEDVIAIGSHGQTVRHMPNLEVGFTLQIGDPNTIATETGIDVIADFRRKDIALGGQGAPLVPAFHQQTFAEVGKKRIILNIGGIANITYLPGNSDQVLGFDTGPGNTLIDAWIQQVKSEPFDRDGAWAESGKTDQDLLTQLLSHPYFSLAYPKSTGRELFNQAWLEQQLSPFNHLDEEDIQSTLLDLTCHSIARDMIKLSNEGELYVCGGGAFNGQLMQRLAALLPGYTLNTTSALGVDPKWAEGIAFAWLAMRNHLGLPANLPAVTGASREAVLGGRFSAK.

12–19 (GTSMDGVD) is an ATP binding site.

The protein belongs to the anhydro-N-acetylmuramic acid kinase family.

The enzyme catalyses 1,6-anhydro-N-acetyl-beta-muramate + ATP + H2O = N-acetyl-D-muramate 6-phosphate + ADP + H(+). The protein operates within amino-sugar metabolism; 1,6-anhydro-N-acetylmuramate degradation. Its pathway is cell wall biogenesis; peptidoglycan recycling. Functionally, catalyzes the specific phosphorylation of 1,6-anhydro-N-acetylmuramic acid (anhMurNAc) with the simultaneous cleavage of the 1,6-anhydro ring, generating MurNAc-6-P. Is required for the utilization of anhMurNAc either imported from the medium or derived from its own cell wall murein, and thus plays a role in cell wall recycling. This is Anhydro-N-acetylmuramic acid kinase from Shewanella baltica (strain OS155 / ATCC BAA-1091).